The primary structure comprises 109 residues: MEGDTISRMMGSGVQMDGKILQTFEKSFVQVQNILDHNRLLINEINQNHESKIPDNLGRNVGLIRELNNNVRRVAHLYVDLSNNFSKSMEASSEGDSSEGRGNRRIRPA.

A disordered region spans residues 88–109 (SMEASSEGDSSEGRGNRRIRPA).

The protein belongs to the EARLY FLOWERING 4 family. As to quaternary structure, homodimer.

It is found in the nucleus. In terms of biological role, component of the central CCA1/LHY-TOC1 feedback loop in the circadian clock that promotes clock accuracy and is required for sustained rhythms in the absence of daily light/dark cycles. This Arabidopsis thaliana (Mouse-ear cress) protein is Protein ELF4-LIKE 3 (EFL3).